The sequence spans 537 residues: MVVLEGGGGVVTIGNNQYLQPDYLAPLPTTMDAKKSPLALLAQTCSQIGADSSAVKPLLAMDKNKTKPGACSSSSNSSSSSGSAEISAAKSPSGQAKSPKSSTPISSTATSASLSNTSTGEIKLAFKPYETNVLSHQNQNSFKSSSSLDAEPTRPSSKNSSSAQERVPSRSKSNATPTDGGKAEISAHDSSSSRKTVSPSGSSQRGASPIVRSGMEVLNNANGTAQHPKEMSSMAAAAAAAAAAYKAAGPYGLNPLSALCCPPGMEQHANPAFRPPFAGGFSHHHAAMLAVAANGGYPGGAPGGGPAGQPNPYISYQRIKTPAGGEAIVPVCKDPYCQGCPYSAHTQQMLMGAPCPAGCTQCEHQKYGLAMASAAGLPPAHPYSQAAAAAAANAAAARSAPYVCSWVVGDAYCGKRFQTSDELFSHLRTHTGNLSDPAAAAAALAQSQAQSLLGTLFPPSALRAGYPTPPLSPMSAAAAAARYHPYAKPPPGALAGGPSPFGAAGAFNPAAAAAAAALGPYYSPYAMYGQRMGAAHQ.

2 disordered regions span residues 64 to 116 (NKTK…SLSN) and 138 to 212 (NQNS…PIVR). Over residues 70–116 (ACSSSSNSSSSSGSAEISAAKSPSGQAKSPKSSTPISSTATSASLSN) the composition is skewed to low complexity. Phosphoserine occurs at positions 98 and 157. Composition is skewed to polar residues over residues 138–177 (NQNS…NATP) and 188–206 (HDSS…SQRG). Position 208 is a phosphoserine (Ser-208). Residues 402–430 (YVCSWVVGDAYCGKRFQTSDELFSHLRTH) form a C2H2-type zinc finger.

The protein belongs to the Elbow/Noc family. In terms of assembly, interacts with elB. As to expression, highly expressed in the adult head.

Functionally, may negatively regulate Notch-induced cell proliferation in the eye-head primordium. Required for development of the supraesophageal ganglion and ocelli. May act in leg and wing primordia to negatively regulate body-wall specifying genes and thereby promote appendage formation. Plays a role in tracheal development. This Drosophila melanogaster (Fruit fly) protein is Zinc finger protein Noc (noc).